Reading from the N-terminus, the 277-residue chain is tRNA pseudouridine synthase B (277 aa).

Catalysis depends on D38, which acts as the Nucleophile.

The protein belongs to the pseudouridine synthase TruB family. Type 1 subfamily.

It carries out the reaction uridine(55) in tRNA = pseudouridine(55) in tRNA. Its function is as follows. Responsible for synthesis of pseudouridine from uracil-55 in the psi GC loop of transfer RNAs. This is tRNA pseudouridine synthase B from Sulfurovum sp. (strain NBC37-1).